The sequence spans 765 residues: Transcription factor RFX3 (765 aa).

Residues 189–264 (HLQWLLDNYE…YHYYGIRVKP (76 aa)) constitute a DNA-binding region (RFX-type winged-helix).

This sequence belongs to the RFX family.

Its subcellular location is the nucleus. Transcription factor required for ciliogenesis and islet cell differentiation during endocrine pancreas development. This chain is Transcription factor RFX3 (rfx3), found in Danio rerio (Zebrafish).